The following is a 352-amino-acid chain: UDP-N-acetylglucosamine--N-acetylmuramyl-(pentapeptide) pyrophosphoryl-undecaprenol N-acetylglucosamine transferase (352 aa).

UDP-N-acetyl-alpha-D-glucosamine-binding positions include 14 to 16, Asn124, Arg164, Ser185, and Gln285; that span reads TGG.

Belongs to the glycosyltransferase 28 family. MurG subfamily.

It is found in the cell inner membrane. The catalysed reaction is di-trans,octa-cis-undecaprenyl diphospho-N-acetyl-alpha-D-muramoyl-L-alanyl-D-glutamyl-meso-2,6-diaminopimeloyl-D-alanyl-D-alanine + UDP-N-acetyl-alpha-D-glucosamine = di-trans,octa-cis-undecaprenyl diphospho-[N-acetyl-alpha-D-glucosaminyl-(1-&gt;4)]-N-acetyl-alpha-D-muramoyl-L-alanyl-D-glutamyl-meso-2,6-diaminopimeloyl-D-alanyl-D-alanine + UDP + H(+). The protein operates within cell wall biogenesis; peptidoglycan biosynthesis. Its function is as follows. Cell wall formation. Catalyzes the transfer of a GlcNAc subunit on undecaprenyl-pyrophosphoryl-MurNAc-pentapeptide (lipid intermediate I) to form undecaprenyl-pyrophosphoryl-MurNAc-(pentapeptide)GlcNAc (lipid intermediate II). The chain is UDP-N-acetylglucosamine--N-acetylmuramyl-(pentapeptide) pyrophosphoryl-undecaprenol N-acetylglucosamine transferase from Chlamydia trachomatis serovar A (strain ATCC VR-571B / DSM 19440 / HAR-13).